Here is a 212-residue protein sequence, read N- to C-terminus: Deoxyribose-phosphate aldolase (212 aa).

The Proton donor/acceptor role is filled by Asp89. Residue Lys151 is the Schiff-base intermediate with acetaldehyde of the active site. Residue Lys180 is the Proton donor/acceptor of the active site.

The protein belongs to the DeoC/FbaB aldolase family. DeoC type 1 subfamily.

Its subcellular location is the cytoplasm. It carries out the reaction 2-deoxy-D-ribose 5-phosphate = D-glyceraldehyde 3-phosphate + acetaldehyde. It functions in the pathway carbohydrate degradation; 2-deoxy-D-ribose 1-phosphate degradation; D-glyceraldehyde 3-phosphate and acetaldehyde from 2-deoxy-alpha-D-ribose 1-phosphate: step 2/2. In terms of biological role, catalyzes a reversible aldol reaction between acetaldehyde and D-glyceraldehyde 3-phosphate to generate 2-deoxy-D-ribose 5-phosphate. The chain is Deoxyribose-phosphate aldolase from Clostridium botulinum (strain Okra / Type B1).